The following is a 566-amino-acid chain: MOB kinase activator-like 2 (566 aa).

2 disordered regions span residues 28 to 57 (ADATNDGSSTAPQTPTASTPRPSSSHSSLS) and 74 to 118 (GRAV…GAQA). The span at 35–57 (SSTAPQTPTASTPRPSSSHSSLS) shows a compositional bias: low complexity. Gly residues predominate over residues 85-115 (QNGGKGNASGAGGGAGGGGAGGASGGTGGTG). Zn(2+) is bound by residues Cys-209, Cys-214, His-289, and His-294. 2 disordered regions span residues 346-407 (GGCQ…SASA) and 498-541 (FSNN…QCNA). Residues 367–388 (LQHQSLQQQQQHHNSSSNSTSS) are compositionally biased toward low complexity. The span at 394-407 (VNSQSNNGSTSASA) shows a compositional bias: polar residues. Residues 498–507 (FSNNNNNNHN) are compositionally biased toward low complexity. Residues 508-526 (LNHHHHHHHHHGHHGHHHA) show a composition bias toward basic residues.

The protein belongs to the MOB1/phocein family. Interacts with and activates trc, also interacts with wts.

It is found in the cytoplasm. The protein resides in the nucleus. Required for the normal morphogenesis of a variety of polarized outgrowths including epidermal hairs, bristles, arista laterals, and dendrites. This Drosophila melanogaster (Fruit fly) protein is MOB kinase activator-like 2 (Mob2).